The sequence spans 454 residues: MAIATINPATGQTVQTFIAHSQVEVNAKLDLAQETFQSFRHLPFAQRGQWLRKAADILEQRRDEWAALMTLEMGKSIPQAIAEVNKCALVCRFYADKAEEYLADEVVTTDASQSFIAYQPLGVILAVMPWNFPFWQVFRFAAPALMAGNVGLLKHASNVPQCALAIAEIFQTAGFPEGAFQTLLIGGKVASELMADDRIQAGTLTGSEPAGASFASAAAGQIKKTVLELGGSDPFIVLEDADLDQALKVAVPARMQNNGQSCIAAKRFIVQASVAEEFFQRLTKAFQALKVGDPSLSTTDIGPLATPDILADIVAQVEQTIAAGAHCRCGGQALDQPGNYYPPTLLTDVPPNAPTYRQEFFGPVALGFTVDNLEEAIALANDIPFGLGASAWTTNPENQQKLIRGIEAGAVFINGMTKSDPRIPFGGIKRSGFGRELGRMGILEFVNAKTVWIA.

NADP(+) contacts are provided by residues 130 to 131 (WN), 154 to 157 (KHAS), and 206 to 207 (GS). The active-site Proton acceptor is Glu228. Leu229 contacts NADP(+). The active-site Nucleophile is Cys262. Glu359 serves as a coordination point for NADP(+).

This sequence belongs to the aldehyde dehydrogenase family.

It catalyses the reaction succinate semialdehyde + NADP(+) + H2O = succinate + NADPH + 2 H(+). The protein operates within amino-acid degradation; 4-aminobutanoate degradation. Catalyzes the NADP(+) dependent oxidation of succinate semialdehyde to succinate. The polypeptide is Probable succinate-semialdehyde dehydrogenase [NADP(+)] (gabD) (Synechocystis sp. (strain ATCC 27184 / PCC 6803 / Kazusa)).